Reading from the N-terminus, the 200-residue chain is Holliday junction branch migration complex subunit RuvA (200 aa).

The tract at residues methionine 1–serine 63 is domain I. The interval serine 64–leucine 142 is domain II. The segment at glutamine 143–threonine 149 is flexible linker. The domain III stretch occupies residues glutamate 150–serine 200.

Belongs to the RuvA family. As to quaternary structure, homotetramer. Forms an RuvA(8)-RuvB(12)-Holliday junction (HJ) complex. HJ DNA is sandwiched between 2 RuvA tetramers; dsDNA enters through RuvA and exits via RuvB. An RuvB hexamer assembles on each DNA strand where it exits the tetramer. Each RuvB hexamer is contacted by two RuvA subunits (via domain III) on 2 adjacent RuvB subunits; this complex drives branch migration. In the full resolvosome a probable DNA-RuvA(4)-RuvB(12)-RuvC(2) complex forms which resolves the HJ.

It localises to the cytoplasm. The RuvA-RuvB-RuvC complex processes Holliday junction (HJ) DNA during genetic recombination and DNA repair, while the RuvA-RuvB complex plays an important role in the rescue of blocked DNA replication forks via replication fork reversal (RFR). RuvA specifically binds to HJ cruciform DNA, conferring on it an open structure. The RuvB hexamer acts as an ATP-dependent pump, pulling dsDNA into and through the RuvAB complex. HJ branch migration allows RuvC to scan DNA until it finds its consensus sequence, where it cleaves and resolves the cruciform DNA. The sequence is that of Holliday junction branch migration complex subunit RuvA from Staphylococcus aureus (strain MRSA252).